A 457-amino-acid chain; its full sequence is Bifunctional protein GlmU (457 aa).

The pyrophosphorylase stretch occupies residues 1-228 (MEGLVTLILA…SEEITGVNSR (228 aa)). UDP-N-acetyl-alpha-D-glucosamine-binding positions include 9 to 12 (LAAG), Lys-23, Gln-73, and 78 to 79 (GT). Mg(2+) is bound at residue Asp-102. Residues Gly-139, Glu-154, Asn-169, and Asn-226 each coordinate UDP-N-acetyl-alpha-D-glucosamine. Asn-226 serves as a coordination point for Mg(2+). Residues 229–249 (VQLFEAEKIMRKRINYRHMEN) form a linker region. The interval 250-457 (GVTIVDPDTT…VQERIKKGRL (208 aa)) is N-acetyltransferase. Residues Arg-331 and Lys-349 each coordinate UDP-N-acetyl-alpha-D-glucosamine. Residue His-361 is the Proton acceptor of the active site. Residues Tyr-364 and Asn-375 each coordinate UDP-N-acetyl-alpha-D-glucosamine. Residues 384–385 (NY), Ala-421, and Arg-438 each bind acetyl-CoA.

It in the N-terminal section; belongs to the N-acetylglucosamine-1-phosphate uridyltransferase family. This sequence in the C-terminal section; belongs to the transferase hexapeptide repeat family. In terms of assembly, homotrimer. Requires Mg(2+) as cofactor.

The protein localises to the cytoplasm. The catalysed reaction is alpha-D-glucosamine 1-phosphate + acetyl-CoA = N-acetyl-alpha-D-glucosamine 1-phosphate + CoA + H(+). The enzyme catalyses N-acetyl-alpha-D-glucosamine 1-phosphate + UTP + H(+) = UDP-N-acetyl-alpha-D-glucosamine + diphosphate. It participates in nucleotide-sugar biosynthesis; UDP-N-acetyl-alpha-D-glucosamine biosynthesis; N-acetyl-alpha-D-glucosamine 1-phosphate from alpha-D-glucosamine 6-phosphate (route II): step 2/2. Its pathway is nucleotide-sugar biosynthesis; UDP-N-acetyl-alpha-D-glucosamine biosynthesis; UDP-N-acetyl-alpha-D-glucosamine from N-acetyl-alpha-D-glucosamine 1-phosphate: step 1/1. The protein operates within bacterial outer membrane biogenesis; LPS lipid A biosynthesis. In terms of biological role, catalyzes the last two sequential reactions in the de novo biosynthetic pathway for UDP-N-acetylglucosamine (UDP-GlcNAc). The C-terminal domain catalyzes the transfer of acetyl group from acetyl coenzyme A to glucosamine-1-phosphate (GlcN-1-P) to produce N-acetylglucosamine-1-phosphate (GlcNAc-1-P), which is converted into UDP-GlcNAc by the transfer of uridine 5-monophosphate (from uridine 5-triphosphate), a reaction catalyzed by the N-terminal domain. The chain is Bifunctional protein GlmU from Thermoanaerobacter pseudethanolicus (strain ATCC 33223 / 39E) (Clostridium thermohydrosulfuricum).